We begin with the raw amino-acid sequence, 144 residues long: 3-hydroxyacyl-[acyl-carrier-protein] dehydratase FabZ (144 aa).

Residue His-48 is part of the active site.

The protein belongs to the thioester dehydratase family. FabZ subfamily.

Its subcellular location is the cytoplasm. The enzyme catalyses a (3R)-hydroxyacyl-[ACP] = a (2E)-enoyl-[ACP] + H2O. In terms of biological role, involved in unsaturated fatty acids biosynthesis. Catalyzes the dehydration of short chain beta-hydroxyacyl-ACPs and long chain saturated and unsaturated beta-hydroxyacyl-ACPs. The polypeptide is 3-hydroxyacyl-[acyl-carrier-protein] dehydratase FabZ (Listeria monocytogenes serotype 4b (strain CLIP80459)).